The chain runs to 628 residues: tRNA 5-methylaminomethyl-2-thiouridine biosynthesis bifunctional protein MnmC (628 aa).

The interval 1–237 (MSSYSPLVPP…KWHMTVGVRE (237 aa)) is tRNA (mnm(5)s(2)U34)-methyltransferase. Residues 265–628 (VGGGLAGAGI…ADLLAAVAPR (364 aa)) are FAD-dependent cmnm(5)s(2)U34 oxidoreductase.

This sequence in the N-terminal section; belongs to the methyltransferase superfamily. tRNA (mnm(5)s(2)U34)-methyltransferase family. It in the C-terminal section; belongs to the DAO family. The cofactor is FAD.

The protein localises to the cytoplasm. The enzyme catalyses 5-aminomethyl-2-thiouridine(34) in tRNA + S-adenosyl-L-methionine = 5-methylaminomethyl-2-thiouridine(34) in tRNA + S-adenosyl-L-homocysteine + H(+). Catalyzes the last two steps in the biosynthesis of 5-methylaminomethyl-2-thiouridine (mnm(5)s(2)U) at the wobble position (U34) in tRNA. Catalyzes the FAD-dependent demodification of cmnm(5)s(2)U34 to nm(5)s(2)U34, followed by the transfer of a methyl group from S-adenosyl-L-methionine to nm(5)s(2)U34, to form mnm(5)s(2)U34. The polypeptide is tRNA 5-methylaminomethyl-2-thiouridine biosynthesis bifunctional protein MnmC (Bordetella petrii (strain ATCC BAA-461 / DSM 12804 / CCUG 43448)).